The chain runs to 392 residues: Isocitrate dehydrogenase [NAD] subunit gamma, mitochondrial (392 aa).

The N-terminal 39 residues, 1-39 (MALKVATAAGGAVKAALRPALLWRPWEVLGSHEAPRRSF), are a transit peptide targeting the mitochondrion. Residues Thr-119 and Asn-132 each contribute to the citrate site. Residues Arg-135, Arg-166, and Asp-253 each contribute to the substrate site. Asp-253 contacts Mn(2+). Asn-311, Thr-312, and Asn-323 together coordinate ADP.

The protein belongs to the isocitrate and isopropylmalate dehydrogenases family. As to quaternary structure, heterooligomer of subunits alpha (IDH3A), beta (IDH3B), and gamma (IDH3G) in the apparent ratio of 2:1:1. The heterodimer containing one IDH3A and one IDH3B subunit and the heterodimer containing one IDH3A and one IDH3G subunit assemble into a heterotetramer (which contains two subunits of IDH3A, one of IDH3B and one of IDH3G) and further into the heterooctamer. The cofactor is Mg(2+). Mn(2+) serves as cofactor.

The protein resides in the mitochondrion. Its activity is regulated as follows. The heterotetramer and the heterodimer composed of IDH3A and IDH3G subunits can be allosterically activated by citrate (CIT) or/and ADP, and the two activators can act independently or synergistically. The heterodimer composed of IDH3A and IDH3B subunits cannot be allosterically regulated and the allosteric regulation of the heterotetramer is through the IDH3G subunit and not the IDH3B subunit. The IDH3G subunit contains the allosteric site which consists of a CIT-binding site and an ADP-binding site, and the binding of CIT and ADP causes conformational changes at the allosteric site which are transmitted to the active site in the catalytic subunit (IDH3A) through a cascade of conformational changes at the heterodimer interface, leading to stabilization of the isocitrate-binding at the active site and thus activation of the enzyme. ATP can activate the heterotetramer and the heterodimer composed of IDH3A and IDH3G subunits at low concentrations but inhibits their activities at high concentrations, whereas ATP exhibits only inhibitory effect on the heterodimer composed of IDH3A and IDH3B subunits. Its function is as follows. Regulatory subunit which plays a role in the allosteric regulation of the enzyme catalyzing the decarboxylation of isocitrate (ICT) into alpha-ketoglutarate. The heterodimer composed of the alpha (IDH3A) and beta (IDH3B) subunits and the heterodimer composed of the alpha (IDH3A) and gamma (IDH3G) subunits, have considerable basal activity but the full activity of the heterotetramer (containing two subunits of IDH3A, one of IDH3B and one of IDH3G) requires the assembly and cooperative function of both heterodimers. In Bos taurus (Bovine), this protein is Isocitrate dehydrogenase [NAD] subunit gamma, mitochondrial (IDH3G).